The following is a 456-amino-acid chain: MAASASTAAGEEDWVLPSEVEVLESIYLDELQVMKGNGRSPWEIFITLHPATAEVQDSQFVCFTLVLRIPVQYPHEVPQISIRNPRGLSDEQIHKISQALGHVAKEGLGTAMLYELIEKGKEILTDNNIPHGQCVICLYGFQEKEAFTKTPCYHYFHCHCLARYIQHMEQELTTQEQEQERQHVVTKQKAVGVQCPVCREPLVYDLASLKAAPEPQQPMELYQPSAESLRQQEELKLLYQRQQEKGGIIDLEAERNRYFISLQQPPAALEPESAVDVSREPQPPNALSAEQSTSLADQSTLPTSLPMTTQYTYEKTSGAGPNQQRPGETQKSVLDPPRHGRGSWRQYDRRHPKGGECCTPKGTSEIHELPPPEKPLKETVDLKAEPRNKGLTGHPQEKGPGSWQGPSARRTRDCARWERSKNRTPGSCYPHLPRGQGAYRSGTRREPLGLESEEGS.

In terms of domain architecture, RWD spans 18–127 (SEVEVLESIY…EKGKEILTDN (110 aa)). Zn(2+) is bound by residues C134, C137, C152, H154, H157, C160, C195, and C198. The RING-type zinc-finger motif lies at 134-199 (CVICLYGFQE…AVGVQCPVCR (66 aa)). The segment at 269–456 (LEPESAVDVS…PLGLESEEGS (188 aa)) is disordered. Residues 288–332 (SAEQSTSLADQSTLPTSLPMTTQYTYEKTSGAGPNQQRPGETQKS) show a composition bias toward polar residues. Composition is skewed to basic and acidic residues over residues 364–388 (SEIHELPPPEKPLKETVDLKAEPRN) and 410–421 (RTRDCARWERSK).

Belongs to the RNF25 family. Interacts with UBE2D2, and may also interact with UBE2E1 and UBE2E3. Interacts with RELA/p65. In terms of processing, ubiquitinated; autoubiquitinated. In terms of tissue distribution, ubiquitous.

The protein resides in the cytoplasm. The catalysed reaction is S-ubiquitinyl-[E2 ubiquitin-conjugating enzyme]-L-cysteine + [acceptor protein]-L-lysine = [E2 ubiquitin-conjugating enzyme]-L-cysteine + N(6)-ubiquitinyl-[acceptor protein]-L-lysine.. It functions in the pathway protein modification; protein ubiquitination. Its function is as follows. E3 ubiquitin-protein ligase that plays a key role in the RNF14-RNF25 translation quality control pathway, a pathway that takes place when a ribosome has stalled during translation, and which promotes ubiquitination and degradation of translation factors on stalled ribosomes. Catalyzes ubiquitination of RPS27A in response to ribosome collisions, promoting activation of RNF14. RNF25 catalyzes ubiquitination of other ribosomal proteins on stalled ribosomes, such as RPL0, RPL1, RPL12, RPS13 and RPS17. Also involved in ubiquitination and degradation of stalled ETF1/eRF1. Independently of its function in the response to stalled ribosomes, mediates ubiquitination and subsequent proteasomal degradation of NKD2. May also stimulate transcription mediated by NF-kappa-B via its interaction with RELA/p65. This chain is E3 ubiquitin-protein ligase RNF25, found in Mus musculus (Mouse).